The chain runs to 249 residues: Diphthine synthase (249 aa).

Residues Asp-83, Leu-86, 111-112 (SI), Leu-163, and Leu-205 each bind S-adenosyl-L-methionine.

This sequence belongs to the diphthine synthase family. As to quaternary structure, homodimer.

The catalysed reaction is 2-[(3S)-amino-3-carboxypropyl]-L-histidyl-[translation elongation factor 2] + 3 S-adenosyl-L-methionine = diphthine-[translation elongation factor 2] + 3 S-adenosyl-L-homocysteine + 3 H(+). It functions in the pathway protein modification; peptidyl-diphthamide biosynthesis. Its function is as follows. S-adenosyl-L-methionine-dependent methyltransferase that catalyzes the trimethylation of the amino group of the modified target histidine residue in translation elongation factor 2 (EF-2), to form an intermediate called diphthine. The three successive methylation reactions represent the second step of diphthamide biosynthesis. The sequence is that of Diphthine synthase from Pyrobaculum islandicum (strain DSM 4184 / JCM 9189 / GEO3).